A 373-amino-acid polypeptide reads, in one-letter code: MSKRDYYEVLGVHRNASETEIKKAYRKLAIKYHPDKNAGDKAAEDKFKEISEAYSILSDTQQRVIYDQYGHAGLNGGGGGGGSYSSGGFGGTPFEDLFGDIFGDIFGGRGSQRSRGRRGDDLRYNLSINFEEAAFGLETKIQIPRHQTCGTCDGIGAKPGTTPRVCPTCQGAGQVRVQQGYFSLTRPCPECNGEGQIIDQPCEECHGSGRVRGKRTLSLKIPAGVETGSRLKLSSEGEPGLNGGPPGDLYVVISVQDHPLFQRDGQHVICEIPISFPQAALGCELEVPTLTEKVNVKVTPGTQSGKVIKLQGQGFPSLQGYARGDQLVVLRVEVPTSLTDRQKELLEEFAKEGGEEIHPMGKTFFDKVKELFG.

The J domain maps to 5–70; it reads DYYEVLGVHR…QQRVIYDQYG (66 aa). Residues 136-214 form a CR-type zinc finger; that stretch reads GLETKIQIPR…CHGSGRVRGK (79 aa). Zn(2+) contacts are provided by cysteine 149, cysteine 152, cysteine 166, cysteine 169, cysteine 188, cysteine 191, cysteine 202, and cysteine 205. CXXCXGXG motif repeat units lie at residues 149-156, 166-173, 188-195, and 202-209; these read CGTCDGIG, CPTCQGAG, CPECNGEG, and CEECHGSG.

The protein belongs to the DnaJ family. In terms of assembly, homodimer. Zn(2+) serves as cofactor.

It is found in the cytoplasm. Functionally, participates actively in the response to hyperosmotic and heat shock by preventing the aggregation of stress-denatured proteins and by disaggregating proteins, also in an autonomous, DnaK-independent fashion. Unfolded proteins bind initially to DnaJ; upon interaction with the DnaJ-bound protein, DnaK hydrolyzes its bound ATP, resulting in the formation of a stable complex. GrpE releases ADP from DnaK; ATP binding to DnaK triggers the release of the substrate protein, thus completing the reaction cycle. Several rounds of ATP-dependent interactions between DnaJ, DnaK and GrpE are required for fully efficient folding. Also involved, together with DnaK and GrpE, in the DNA replication of plasmids through activation of initiation proteins. This is Chaperone protein DnaJ from Syntrophotalea carbinolica (strain DSM 2380 / NBRC 103641 / GraBd1) (Pelobacter carbinolicus).